The chain runs to 298 residues: Protease HtpX (298 aa).

2 consecutive transmembrane segments (helical) span residues 4 to 24 and 41 to 61; these read IALYLLTNLAVIVVASITLSL and TSLLIFSAVFGFAGSLISLLI. His-147 is a binding site for Zn(2+). Glu-148 is an active-site residue. His-151 provides a ligand contact to Zn(2+). 2 helical membrane-spanning segments follow: residues 162 to 182 and 193 to 213; these read LIQGVVNTFVIFAARVVGYVI and GLGFGYYIVVIVTEIIFGIAA. A Zn(2+)-binding site is contributed by Glu-225.

The protein belongs to the peptidase M48B family. Requires Zn(2+) as cofactor.

Its subcellular location is the cell inner membrane. The sequence is that of Protease HtpX from Alcanivorax borkumensis (strain ATCC 700651 / DSM 11573 / NCIMB 13689 / SK2).